A 520-amino-acid polypeptide reads, in one-letter code: Glutamate--cysteine ligase (520 aa).

It belongs to the glutamate--cysteine ligase type 1 family. Type 1 subfamily.

It catalyses the reaction L-cysteine + L-glutamate + ATP = gamma-L-glutamyl-L-cysteine + ADP + phosphate + H(+). The protein operates within sulfur metabolism; glutathione biosynthesis; glutathione from L-cysteine and L-glutamate: step 1/2. The chain is Glutamate--cysteine ligase from Leptospira interrogans serogroup Icterohaemorrhagiae serovar Lai (strain 56601).